The sequence spans 171 residues: MIIYKDIITGDEMFSDIYKIKESENGMMLEVEGKMITRAEGDIDDALIGGNASAEVADEGCDSTSVSGVDIVLNHKLQETSYDKKSYTAYIKDYMKAVKAKLQESAPNRVDPFMANAPAEVKKILGNIKNFQFFTGESMNPDGMIGLLDFREDGVTPYMIFFKDGLEIEKC.

The region spanning 1–171 (MIIYKDIITG…FKDGLEIEKC (171 aa)) is the TCTP domain.

Belongs to the TCTP family.

The protein resides in the cytoplasm. Its function is as follows. Involved in calcium binding and microtubule stabilization. The chain is Translationally-controlled tumor protein homolog (tpt1) from Danio rerio (Zebrafish).